Here is a 118-residue protein sequence, read N- to C-terminus: Holo-[acyl-carrier-protein] synthase (118 aa).

Mg(2+) is bound by residues Asp-8 and Glu-58.

It belongs to the P-Pant transferase superfamily. AcpS family. The cofactor is Mg(2+).

The protein localises to the cytoplasm. It carries out the reaction apo-[ACP] + CoA = holo-[ACP] + adenosine 3',5'-bisphosphate + H(+). Its function is as follows. Transfers the 4'-phosphopantetheine moiety from coenzyme A to a Ser of acyl-carrier-protein. The chain is Holo-[acyl-carrier-protein] synthase from Listeria innocua serovar 6a (strain ATCC BAA-680 / CLIP 11262).